Here is a 140-residue protein sequence, read N- to C-terminus: uncharacterized protein (140 aa).

A C2H2-type zinc finger spans residues 21–42 (CPYCNYTNADVKAIKKHIKSKH).

It to M.jannaschii MJECL27.

This is an uncharacterized protein from Methanocaldococcus jannaschii (strain ATCC 43067 / DSM 2661 / JAL-1 / JCM 10045 / NBRC 100440) (Methanococcus jannaschii).